Reading from the N-terminus, the 440-residue chain is Protein FPV117 (440 aa).

Belongs to the poxviruses G5 family.

This is Protein FPV117 from Fowlpox virus (strain NVSL) (FPV).